Reading from the N-terminus, the 407-residue chain is GTPase Obg (407 aa).

The Obg domain maps to Met-1 to Leu-159. The tract at residues Asn-127–Arg-150 is disordered. Residues Arg-129–Pro-143 are compositionally biased toward polar residues. Residues Ala-160–Glu-333 form the OBG-type G domain. Residues Gly-166 to Ser-173, Phe-191 to Val-195, Asp-213 to Gly-216, Asn-283 to Asp-286, and Ser-314 to Ile-316 each bind GTP. Mg(2+) is bound by residues Ser-173 and Thr-193. Residues Val-378 to Asp-407 are disordered. The span at Gly-385–Pro-400 shows a compositional bias: acidic residues.

It belongs to the TRAFAC class OBG-HflX-like GTPase superfamily. OBG GTPase family. As to quaternary structure, monomer. It depends on Mg(2+) as a cofactor.

The protein resides in the cytoplasm. An essential GTPase which binds GTP, GDP and possibly (p)ppGpp with moderate affinity, with high nucleotide exchange rates and a fairly low GTP hydrolysis rate. Plays a role in control of the cell cycle, stress response, ribosome biogenesis and in those bacteria that undergo differentiation, in morphogenesis control. This Pseudomonas entomophila (strain L48) protein is GTPase Obg.